The sequence spans 440 residues: 3-phosphoshikimate 1-carboxyvinyltransferase (440 aa).

3-phosphoshikimate-binding residues include lysine 26, serine 27, and arginine 31. Lysine 26 serves as a coordination point for phosphoenolpyruvate. Phosphoenolpyruvate contacts are provided by glycine 99 and arginine 127. The 3-phosphoshikimate site is built by serine 172, glutamine 174, aspartate 320, and lysine 347. Residue glutamine 174 participates in phosphoenolpyruvate binding. The active-site Proton acceptor is the aspartate 320. Arginine 351 and arginine 392 together coordinate phosphoenolpyruvate.

The protein belongs to the EPSP synthase family. As to quaternary structure, monomer.

It is found in the cytoplasm. It catalyses the reaction 3-phosphoshikimate + phosphoenolpyruvate = 5-O-(1-carboxyvinyl)-3-phosphoshikimate + phosphate. Its pathway is metabolic intermediate biosynthesis; chorismate biosynthesis; chorismate from D-erythrose 4-phosphate and phosphoenolpyruvate: step 6/7. Functionally, catalyzes the transfer of the enolpyruvyl moiety of phosphoenolpyruvate (PEP) to the 5-hydroxyl of shikimate-3-phosphate (S3P) to produce enolpyruvyl shikimate-3-phosphate and inorganic phosphate. This Xanthomonas axonopodis pv. citri (strain 306) protein is 3-phosphoshikimate 1-carboxyvinyltransferase.